We begin with the raw amino-acid sequence, 371 residues long: Bifunctional enzyme IspD/IspF (371 aa).

The 2-C-methyl-D-erythritol 4-phosphate cytidylyltransferase stretch occupies residues 1 to 210 (MSEISLIMLA…LDLPKPSFEI (210 aa)). The interval 211-371 (FTGNGFDVHE…NLKYFDWTRL (161 aa)) is 2-C-methyl-D-erythritol 2,4-cyclodiphosphate synthase. The a divalent metal cation site is built by Asp-217 and His-219. 4-CDP-2-C-methyl-D-erythritol 2-phosphate-binding positions include 217-219 (DVH) and 243-244 (HS). Residue His-251 coordinates a divalent metal cation. 4-CDP-2-C-methyl-D-erythritol 2-phosphate-binding positions include 265 to 267 (DIG), 270 to 274 (YPDTD), 341 to 344 (TTTE), Phe-348, and Arg-351.

In the N-terminal section; belongs to the IspD/TarI cytidylyltransferase family. IspD subfamily. It in the C-terminal section; belongs to the IspF family. It depends on a divalent metal cation as a cofactor.

The catalysed reaction is 2-C-methyl-D-erythritol 4-phosphate + CTP + H(+) = 4-CDP-2-C-methyl-D-erythritol + diphosphate. It carries out the reaction 4-CDP-2-C-methyl-D-erythritol 2-phosphate = 2-C-methyl-D-erythritol 2,4-cyclic diphosphate + CMP. The protein operates within isoprenoid biosynthesis; isopentenyl diphosphate biosynthesis via DXP pathway; isopentenyl diphosphate from 1-deoxy-D-xylulose 5-phosphate: step 2/6. It participates in isoprenoid biosynthesis; isopentenyl diphosphate biosynthesis via DXP pathway; isopentenyl diphosphate from 1-deoxy-D-xylulose 5-phosphate: step 4/6. Bifunctional enzyme that catalyzes the formation of 4-diphosphocytidyl-2-C-methyl-D-erythritol from CTP and 2-C-methyl-D-erythritol 4-phosphate (MEP) (IspD), and catalyzes the conversion of 4-diphosphocytidyl-2-C-methyl-D-erythritol 2-phosphate (CDP-ME2P) to 2-C-methyl-D-erythritol 2,4-cyclodiphosphate (ME-CPP) with a corresponding release of cytidine 5-monophosphate (CMP) (IspF). This is Bifunctional enzyme IspD/IspF from Campylobacter jejuni subsp. doylei (strain ATCC BAA-1458 / RM4099 / 269.97).